A 342-amino-acid polypeptide reads, in one-letter code: Ribosomal RNA small subunit methyltransferase H (342 aa).

S-adenosyl-L-methionine is bound by residues 36–38 (GGH), Asp-56, Phe-82, Asp-100, and Gln-107. The disordered stretch occupies residues 311 to 342 (GESGMGKGNSAAASRFPTADSPFPASANGDAA).

It belongs to the methyltransferase superfamily. RsmH family.

Its subcellular location is the cytoplasm. The enzyme catalyses cytidine(1402) in 16S rRNA + S-adenosyl-L-methionine = N(4)-methylcytidine(1402) in 16S rRNA + S-adenosyl-L-homocysteine + H(+). In terms of biological role, specifically methylates the N4 position of cytidine in position 1402 (C1402) of 16S rRNA. The polypeptide is Ribosomal RNA small subunit methyltransferase H (Xanthomonas axonopodis pv. citri (strain 306)).